The primary structure comprises 72 residues: Osmotically-inducible lipoprotein B (72 aa).

The signal sequence occupies residues 1–23; that stretch reads MFVTSKKMTAAVLAITLAMSLSA. A lipid anchor (N-palmitoyl cysteine) is attached at C24. C24 carries the S-diacylglycerol cysteine lipid modification.

It is found in the cell membrane. Provides resistance to osmotic stress. May be important for stationary-phase survival. This chain is Osmotically-inducible lipoprotein B (osmB), found in Escherichia coli O157:H7.